The sequence spans 514 residues: Peptide chain release factor 3 (514 aa).

Residues K8 to H268 form the tr-type G domain. Residues S17 to T24, D85 to H89, and N139 to D142 contribute to the GTP site.

The protein belongs to the TRAFAC class translation factor GTPase superfamily. Classic translation factor GTPase family. PrfC subfamily.

Its subcellular location is the cytoplasm. Its function is as follows. Increases the formation of ribosomal termination complexes and stimulates activities of RF-1 and RF-2. It binds guanine nucleotides and has strong preference for UGA stop codons. It may interact directly with the ribosome. The stimulation of RF-1 and RF-2 is significantly reduced by GTP and GDP, but not by GMP. The chain is Peptide chain release factor 3 from Streptococcus thermophilus (strain CNRZ 1066).